The primary structure comprises 457 residues: Argininosuccinate lyase (457 aa).

It belongs to the lyase 1 family. Argininosuccinate lyase subfamily.

The protein localises to the cytoplasm. It catalyses the reaction 2-(N(omega)-L-arginino)succinate = fumarate + L-arginine. It functions in the pathway amino-acid biosynthesis; L-arginine biosynthesis; L-arginine from L-ornithine and carbamoyl phosphate: step 3/3. The protein is Argininosuccinate lyase of Escherichia coli O9:H4 (strain HS).